We begin with the raw amino-acid sequence, 250 residues long: Ribosomal RNA small subunit methyltransferase J (250 aa).

Residues R102–D103, E118–R119, S154–S155, and D172 contribute to the S-adenosyl-L-methionine site.

This sequence belongs to the methyltransferase superfamily. RsmJ family.

The protein localises to the cytoplasm. The enzyme catalyses guanosine(1516) in 16S rRNA + S-adenosyl-L-methionine = N(2)-methylguanosine(1516) in 16S rRNA + S-adenosyl-L-homocysteine + H(+). In terms of biological role, specifically methylates the guanosine in position 1516 of 16S rRNA. This Edwardsiella ictaluri (strain 93-146) protein is Ribosomal RNA small subunit methyltransferase J.